Consider the following 675-residue polypeptide: DNA ligase (675 aa).

NAD(+) is bound by residues aspartate 36–aspartate 40, serine 85–leucine 86, and glutamate 117. Catalysis depends on lysine 119, which acts as the N6-AMP-lysine intermediate. 4 residues coordinate NAD(+): arginine 140, glutamate 177, lysine 294, and lysine 318. Positions 412, 415, 430, and 436 each coordinate Zn(2+). The BRCT domain maps to alanine 597–glutamate 675.

Belongs to the NAD-dependent DNA ligase family. LigA subfamily. It depends on Mg(2+) as a cofactor. Mn(2+) is required as a cofactor.

It catalyses the reaction NAD(+) + (deoxyribonucleotide)n-3'-hydroxyl + 5'-phospho-(deoxyribonucleotide)m = (deoxyribonucleotide)n+m + AMP + beta-nicotinamide D-nucleotide.. DNA ligase that catalyzes the formation of phosphodiester linkages between 5'-phosphoryl and 3'-hydroxyl groups in double-stranded DNA using NAD as a coenzyme and as the energy source for the reaction. It is essential for DNA replication and repair of damaged DNA. In Thioalkalivibrio sulfidiphilus (strain HL-EbGR7), this protein is DNA ligase.